The sequence spans 426 residues: Methionine aminopeptidase 2 (426 aa).

The interval 1 to 72 (MTSATTTEAT…QEQTNPPTVG (72 aa)) is disordered. Positions 10–34 (TAKDLQEKLSLKENDVVEDDGKVEE) are enriched in basic and acidic residues. Over residues 47–60 (KKKKKKKKSSKKKK) the composition is skewed to basic residues. Residue His179 coordinates substrate. A divalent metal cation-binding residues include Asp199, Asp210, and His279. Position 287 (His287) interacts with substrate. Residues Glu312 and Glu407 each contribute to the a divalent metal cation site.

Belongs to the peptidase M24A family. Methionine aminopeptidase eukaryotic type 2 subfamily. It depends on Co(2+) as a cofactor. Zn(2+) serves as cofactor. The cofactor is Mn(2+). Fe(2+) is required as a cofactor.

It is found in the cytoplasm. The enzyme catalyses Release of N-terminal amino acids, preferentially methionine, from peptides and arylamides.. Cotranslationally removes the N-terminal methionine from nascent proteins. The N-terminal methionine is often cleaved when the second residue in the primary sequence is small and uncharged (Met-Ala-, Cys, Gly, Pro, Ser, Thr, or Val). The polypeptide is Methionine aminopeptidase 2 (fma2) (Schizosaccharomyces pombe (strain 972 / ATCC 24843) (Fission yeast)).